Consider the following 382-residue polypeptide: Succinate--CoA ligase [ADP-forming] subunit beta (382 aa).

The region spanning K9–K237 is the ATP-grasp domain. ATP-binding positions include K45, G52–G54, E91, V94, and E99. Mg(2+)-binding residues include N191 and D205. Substrate-binding positions include N257 and G314 to T316.

This sequence belongs to the succinate/malate CoA ligase beta subunit family. Heterotetramer of two alpha and two beta subunits. Requires Mg(2+) as cofactor.

It catalyses the reaction succinate + ATP + CoA = succinyl-CoA + ADP + phosphate. The enzyme catalyses GTP + succinate + CoA = succinyl-CoA + GDP + phosphate. It participates in carbohydrate metabolism; tricarboxylic acid cycle; succinate from succinyl-CoA (ligase route): step 1/1. Functionally, succinyl-CoA synthetase functions in the citric acid cycle (TCA), coupling the hydrolysis of succinyl-CoA to the synthesis of either ATP or GTP and thus represents the only step of substrate-level phosphorylation in the TCA. The beta subunit provides nucleotide specificity of the enzyme and binds the substrate succinate, while the binding sites for coenzyme A and phosphate are found in the alpha subunit. This Haloarcula marismortui (strain ATCC 43049 / DSM 3752 / JCM 8966 / VKM B-1809) (Halobacterium marismortui) protein is Succinate--CoA ligase [ADP-forming] subunit beta.